The primary structure comprises 888 residues: Molybdenum cofactor sulfurase (888 aa).

Ser34 carries the phosphoserine modification. Lys264 bears the N6-(pyridoxal phosphate)lysine mark. Residue Cys424 is part of the active site. Phosphoserine is present on residues Ser528 and Ser530. Residues 706 to 867 (KQSSNSQRNA…LSVGSQVLPV (162 aa)) enclose the MOSC domain.

This sequence belongs to the class-V pyridoxal-phosphate-dependent aminotransferase family. MOCOS subfamily. Pyridoxal 5'-phosphate is required as a cofactor.

It catalyses the reaction Mo-molybdopterin + L-cysteine + AH2 = thio-Mo-molybdopterin + L-alanine + A + H2O. It participates in cofactor biosynthesis; molybdopterin biosynthesis. Sulfurates the molybdenum cofactor. Sulfation of molybdenum is essential for xanthine dehydrogenase (XDH) and aldehyde oxidase (ADO) enzymes in which molybdenum cofactor is liganded by 1 oxygen and 1 sulfur atom in active form. In vitro, the C-terminal domain is able to reduce N-hydroxylated prodrugs, such as benzamidoxime. This Homo sapiens (Human) protein is Molybdenum cofactor sulfurase.